Reading from the N-terminus, the 246-residue chain is Exosome complex component Rrp41 (246 aa).

This sequence belongs to the RNase PH family. Rrp41 subfamily. In terms of assembly, component of the archaeal exosome complex. Forms a hexameric ring-like arrangement composed of 3 Rrp41-Rrp42 heterodimers. The hexameric ring associates with a trimer of Rrp4 and/or Csl4 subunits.

Its subcellular location is the cytoplasm. In terms of biological role, catalytic component of the exosome, which is a complex involved in RNA degradation. Has 3'-&gt;5' exoribonuclease activity. Can also synthesize heteromeric RNA-tails. The sequence is that of Exosome complex component Rrp41 from Aeropyrum pernix (strain ATCC 700893 / DSM 11879 / JCM 9820 / NBRC 100138 / K1).